The chain runs to 300 residues: Ribonuclease HIII (300 aa).

One can recognise an RNase H type-2 domain in the interval 83 to 300 (IPIIGSDEVG…THKAQALLTK (218 aa)). A divalent metal cation contacts are provided by aspartate 89, glutamate 90, and aspartate 194.

This sequence belongs to the RNase HII family. RnhC subfamily. The cofactor is Mn(2+). It depends on Mg(2+) as a cofactor.

The protein resides in the cytoplasm. The catalysed reaction is Endonucleolytic cleavage to 5'-phosphomonoester.. Functionally, endonuclease that specifically degrades the RNA of RNA-DNA hybrids. This is Ribonuclease HIII from Streptococcus pyogenes serotype M5 (strain Manfredo).